The following is a 161-amino-acid chain: Nucleotide-binding protein Plav_2177 (161 aa).

This sequence belongs to the YajQ family.

Nucleotide-binding protein. This Parvibaculum lavamentivorans (strain DS-1 / DSM 13023 / NCIMB 13966) protein is Nucleotide-binding protein Plav_2177.